Here is a 367-residue protein sequence, read N- to C-terminus: Peptide chain release factor 2 (367 aa).

Gln250 carries the N5-methylglutamine modification.

This sequence belongs to the prokaryotic/mitochondrial release factor family. In terms of processing, methylated by PrmC. Methylation increases the termination efficiency of RF2.

It localises to the cytoplasm. Peptide chain release factor 2 directs the termination of translation in response to the peptide chain termination codons UGA and UAA. The protein is Peptide chain release factor 2 of Chloroflexus aggregans (strain MD-66 / DSM 9485).